Reading from the N-terminus, the 2463-residue chain is Protein TIC 214 (2463 aa).

Transmembrane regions (helical) follow at residues 18-38 (VGLYYGFISAFSIGSSYLFLL), 60-80 (FFTGQLLIFISILYGPLHLAL), 86-106 (ILLLLAPYFFFHYLFSNSGQW), 127-147 (LVFLNNLLFQLFSLSLLGRPM), 170-190 (FVGWLIGHILVLKWAGLVFVW), and 297-317 (LFSIILFAIFLLYLDQTPLLY). Residues 326 to 441 (QLQRKLSNET…AARAMQEAYK (116 aa)) adopt a coiled-coil conformation. Disordered stretches follow at residues 792-841 (AVPK…RKVN), 1230-1249 (SIQKDPKKEKDPKKEKGPKK), 1393-1417 (SGGRETPEFTRSQKDIDNLKNEQDF), 2116-2136 (EEEKIEKEKRKKERKKEKLKK), and 2162-2187 (KQRAKNIARMEEEDKKARKKRKRKVQ). Over residues 794–830 (PKKKKKISKSKQKNVKSKQKNVKSKQKNVKSKQKNVK) the composition is skewed to basic residues. Basic and acidic residues-rich tracts occupy residues 832–841 (KQNEIKRKVN), 1231–1249 (IQKDPKKEKDPKKEKGPKK), and 1397–1417 (ETPEFTRSQKDIDNLKNEQDF). Positions 2049 to 2192 (WDALVASLKQ…KRKVQVQENK (144 aa)) form a coiled coil. Positions 2124–2136 (KRKKERKKEKLKK) are enriched in basic residues.

It belongs to the TIC214 family. In terms of assembly, part of the Tic complex.

It is found in the plastid. Its subcellular location is the chloroplast inner membrane. Its function is as follows. Involved in protein precursor import into chloroplasts. May be part of an intermediate translocation complex acting as a protein-conducting channel at the inner envelope. The sequence is that of Protein TIC 214 from Oenothera elata subsp. hookeri (Hooker's evening primrose).